The chain runs to 171 residues: NADH-quinone oxidoreductase subunit I 1 (171 aa).

2 4Fe-4S ferredoxin-type domains span residues 41 to 71 (LSRDPDGEERCVACYLCAAACPVDCIALQAT) and 81 to 110 (EFFRINFSRCIFCGFCEEACPTDAIQLTPD). [4Fe-4S] cluster is bound by residues Cys51, Cys54, Cys57, Cys61, Cys90, Cys93, Cys96, and Cys100.

This sequence belongs to the complex I 23 kDa subunit family. In terms of assembly, NDH-1 is composed of 14 different subunits. Subunits NuoA, H, J, K, L, M, N constitute the membrane sector of the complex. It depends on [4Fe-4S] cluster as a cofactor.

Its subcellular location is the cell inner membrane. It catalyses the reaction a quinone + NADH + 5 H(+)(in) = a quinol + NAD(+) + 4 H(+)(out). Its function is as follows. NDH-1 shuttles electrons from NADH, via FMN and iron-sulfur (Fe-S) centers, to quinones in the respiratory chain. The immediate electron acceptor for the enzyme in this species is believed to be ubiquinone. Couples the redox reaction to proton translocation (for every two electrons transferred, four hydrogen ions are translocated across the cytoplasmic membrane), and thus conserves the redox energy in a proton gradient. This Nitrosospira multiformis (strain ATCC 25196 / NCIMB 11849 / C 71) protein is NADH-quinone oxidoreductase subunit I 1.